A 578-amino-acid polypeptide reads, in one-letter code: Laccase-10 (578 aa).

The N-terminal stretch at 1-29 (MGARCLALLLLYGTLLLLLLLPQLPLAGA) is a signal peptide. 2 Plastocyanin-like domains span residues 37-153 (NVKL…PKAG) and 163-319 (KDVP…YAPP). Asn42 and Asn83 each carry an N-linked (GlcNAc...) asparagine glycan. Cu cation is bound by residues His87 and His89. N-linked (GlcNAc...) asparagine glycosylation occurs at Asn119. Residues His132 and His134 each coordinate Cu cation. Asn192, Asn208, Asn244, Asn307, Asn336, Asn384, Asn392, Asn402, Asn438, Asn445, Asn448, Asn451, and Asn461 each carry an N-linked (GlcNAc...) asparagine glycan. In terms of domain architecture, Plastocyanin-like 3 spans 428 to 562 (DFPASPLEPF…KMAWVVNDGP (135 aa)). The Cu cation site is built by His479, His482, His484, His541, Cys542, His543, and His547.

It belongs to the multicopper oxidase family. Requires Cu cation as cofactor.

The protein localises to the secreted. It is found in the extracellular space. It localises to the apoplast. The enzyme catalyses 4 hydroquinone + O2 = 4 benzosemiquinone + 2 H2O. Functionally, lignin degradation and detoxification of lignin-derived products. This is Laccase-10 (LAC10) from Oryza sativa subsp. japonica (Rice).